The following is a 661-amino-acid chain: Fructose-1,6-bisphosphatase class 3 (661 aa).

The protein belongs to the FBPase class 3 family. The cofactor is Mn(2+).

It catalyses the reaction beta-D-fructose 1,6-bisphosphate + H2O = beta-D-fructose 6-phosphate + phosphate. The protein operates within carbohydrate biosynthesis; gluconeogenesis. The sequence is that of Fructose-1,6-bisphosphatase class 3 from Clostridioides difficile (strain 630) (Peptoclostridium difficile).